The primary structure comprises 308 residues: Ribosomal RNA large subunit methyltransferase F (308 aa).

Belongs to the methyltransferase superfamily. METTL16/RlmF family.

The protein resides in the cytoplasm. The catalysed reaction is adenosine(1618) in 23S rRNA + S-adenosyl-L-methionine = N(6)-methyladenosine(1618) in 23S rRNA + S-adenosyl-L-homocysteine + H(+). Functionally, specifically methylates the adenine in position 1618 of 23S rRNA. This is Ribosomal RNA large subunit methyltransferase F from Salmonella agona (strain SL483).